The chain runs to 402 residues: MAAAAALRAPAQSSVTFEDVAVNFSLEEWSLLNEAQRCLYRDVMLETLTLISSLGCWHGGEDEAAPSKQSTCIHIYKDQGGHSGERPYECGEYRKLFKNKSCLTEPRRDHKHRNVRTGERPYECSKYGKLFHQKPTLHIHERFHTGQKTYECSECGKSFHQSSSLLQRQTLHTRERPYECIECGKAFAEKSSLINHRKVHSGAKRYECNECGKSFAYTSSLIKHRRIHTGERPYECSECGRSFAENSSLIKHLRVHTGERPYECVECGKSFRRSSSLLQHQRVHTRERPYECSECGKSFSLRSNLIHHQRVHTGERHECGQCGKSFSRKSSLIIHLRVHTGERPYECSDCGKSFAENSSLIKHLRVHTGERPYECIDCGKSFRHSSSFRRHQRVHTGMRPYK.

The 73-residue stretch at 15–87 (VTFEDVAVNF…DQGGHSGERP (73 aa)) folds into the KRAB domain. The C2H2-type 1; degenerate zinc finger occupies 88-116 (YECGEYRKLFKNKSCLTEPRRDHKHRNVR). The C2H2-type 2; degenerate zinc-finger motif lies at 122–144 (YECSKYGKLFHQKPTLHIHERFH). Residues 150–172 (YECSECGKSFHQSSSLLQRQTLH) form a C2H2-type 3; degenerate zinc finger. C2H2-type zinc fingers lie at residues 178–200 (YECI…RKVH), 206–228 (YECN…RRIH), 234–256 (YECS…LRVH), 262–284 (YECV…QRVH), 290–312 (YECS…QRVH), 317–339 (HECG…LRVH), 345–367 (YECS…LRVH), and 373–395 (YECI…QRVH).

The protein belongs to the krueppel C2H2-type zinc-finger protein family.

The protein localises to the nucleus. Functionally, may be involved in transcriptional regulation. The protein is Zinc finger protein 586 (ZNF586) of Homo sapiens (Human).